Consider the following 166-residue polypeptide: Lactose-binding lectin l-2 (166 aa).

The first 24 residues, 1–24 (MVSFKLPAFLCVAVLSSMALVSHG), serve as a signal peptide directing secretion. Cystine bridges form between Cys34–Cys45, Cys62–Cys160, and Cys136–Cys152. In terms of domain architecture, C-type lectin spans 41–161 (HKNRCYLHVA…CDLLFPSICV (121 aa)).

As to quaternary structure, homodimer; disulfide-linked. Skin; contained within club cells which are a component of the epidermis in combination with epithelial cells and mucus cells (at protein level).

The protein localises to the secreted. Functionally, involved in host defense at the body surface. Causes agglutination and suppresses the growth of the Gram-negative bacterium E.coli K12. Possesses calcium-independent hemagglutinating activity. The chain is Lactose-binding lectin l-2 from Anguilla japonica (Japanese eel).